The primary structure comprises 118 residues: Cell division protein FtsB (118 aa).

At 1–6 (MRNWRW) the chain is on the cytoplasmic side. A helical membrane pass occupies residues 7 to 24 (LLLVLAALLAWLQHRFWF). The Periplasmic portion of the chain corresponds to 25 to 118 (GPGNSGEVRM…DLSQPRREKR (94 aa)). Residues 30 to 66 (GEVRMLQVQIVQQHQENERLRQRNASLAAEVKNLKDG) are a coiled coil. The disordered stretch occupies residues 98–118 (LPNDTSADHGVDLSQPRREKR). Residues 103 to 118 (SADHGVDLSQPRREKR) show a composition bias toward basic and acidic residues.

It belongs to the FtsB family. Part of a complex composed of FtsB, FtsL and FtsQ.

The protein localises to the cell inner membrane. Functionally, essential cell division protein. May link together the upstream cell division proteins, which are predominantly cytoplasmic, with the downstream cell division proteins, which are predominantly periplasmic. This chain is Cell division protein FtsB, found in Xylella fastidiosa (strain M12).